The primary structure comprises 375 residues: Filamin-binding LIM protein 1 (375 aa).

The interval 1 to 70 is filamin-binding; sequence MASKPEKRVA…SPWTPPGRAA (70 aa). 2 disordered regions span residues 43–119 and 137–176; these read WEAP…PSEE and HLSPPLPPPPPQAPAERPSVQPSPLRPMEEELPPPPAERV. Composition is skewed to pro residues over residues 104 to 114 and 140 to 149; these read FPPPPPPPPVL and PPLPPPPPQA. Over residues 150-159 the composition is skewed to low complexity; that stretch reads PAERPSVQPS. LIM zinc-binding domains are found at residues 183–244, 245–302, and 303–372; these read DICA…TLER, CGKC…RKFA, and PVCS…RSAA. The tract at residues 278–375 is FERMT2-binding; sequence IGDESFALGS…HVKRSAAGCC (98 aa).

In terms of assembly, interacts with FERMT2, FLNA, FLNB and FLNC. Interacts with NKX2-5.

It is found in the cell junction. The protein resides in the focal adhesion. It localises to the cytoplasm. The protein localises to the cytoskeleton. Its subcellular location is the stress fiber. In terms of biological role, serves as an anchoring site for cell-ECM adhesion proteins and filamin-containing actin filaments. Is implicated in cell shape modulation (spreading) and motility. May participate in the regulation of filamin-mediated cross-linking and stabilization of actin filaments. May also regulate the assembly of filamin-containing signaling complexes that control actin assembly. Promotes dissociation of FLNA from ITGB3 and ITGB7. Promotes activation of integrins and regulates integrin-mediated cell-cell adhesion. This chain is Filamin-binding LIM protein 1 (FBLIM1), found in Pongo abelii (Sumatran orangutan).